A 516-amino-acid polypeptide reads, in one-letter code: Cytochrome P450 monooxygenase dtxS2 (516 aa).

The chain crosses the membrane as a helical span at residues I23–F43. An N-linked (GlcNAc...) asparagine glycan is attached at N187. A helical transmembrane segment spans residues V229–S249. C458 serves as a coordination point for heme.

Belongs to the cytochrome P450 family. Requires heme as cofactor.

Its subcellular location is the membrane. Its pathway is secondary metabolite biosynthesis. Its function is as follows. Cytochrome P450 monooxygenase; part of the gene cluster that mediates the biosynthesis of destruxins, insecticidal cyclic hexadepsipeptides which induce flaccid paralysis and visceral muscle contraction in insects through targeting the calcium channels and vacuolar-type ATPases. The aldo-keto reductase dtxS3 converts alpha-ketoisocaproic acid from deaminated leucine into alpha-hydroxyisocaproic acid (HIC), which is the first substrate for destruxin assembly by dtxS1. L-aspartate decarboxylase dtxS4 converts aspartic acid into beta-alanine, the last substrate for the destruxin assembly line performed by dtxS1. The nonribosomal peptide synthetase dtxS1 synthesizes destruxins B and B2, whereas the cytochrome P450 monooxygenase dtxS2 is required to convert destruxin B into other destruxin derivatives, including destructins C, D, A and E. Destruxin E-diol (ED) is further produced in a non-enzymatic manner from destruxin E. Destruxins play an important role in virulence and escape from insect host immune defenses. In Metarhizium robertsii (strain ARSEF 23 / ATCC MYA-3075) (Metarhizium anisopliae (strain ARSEF 23)), this protein is Cytochrome P450 monooxygenase dtxS2.